Consider the following 296-residue polypeptide: Polyamine aminopropyltransferase (296 aa).

The PABS domain maps to 5 to 238 (ELWYETLHAN…GIMTFAWATQ (234 aa)). Q33 lines the S-methyl-5'-thioadenosine pocket. The spermidine site is built by H64 and D88. S-methyl-5'-thioadenosine contacts are provided by residues E108 and 140–141 (DG). D158 serves as the catalytic Proton acceptor. 158–161 (DCTD) contributes to the spermidine binding site. P165 is a binding site for S-methyl-5'-thioadenosine.

This sequence belongs to the spermidine/spermine synthase family. In terms of assembly, homodimer or homotetramer.

The protein resides in the cytoplasm. It carries out the reaction S-adenosyl 3-(methylsulfanyl)propylamine + putrescine = S-methyl-5'-thioadenosine + spermidine + H(+). The protein operates within amine and polyamine biosynthesis; spermidine biosynthesis; spermidine from putrescine: step 1/1. In terms of biological role, catalyzes the irreversible transfer of a propylamine group from the amino donor S-adenosylmethioninamine (decarboxy-AdoMet) to putrescine (1,4-diaminobutane) to yield spermidine. This chain is Polyamine aminopropyltransferase, found in Yersinia pseudotuberculosis serotype O:3 (strain YPIII).